A 568-amino-acid chain; its full sequence is UPF0313 protein FN0734 (568 aa).

Residues 289-562 (ALDTIKYSVT…KQKQKDIVTE (274 aa)) enclose the Radical SAM core domain. Positions 303, 307, and 310 each coordinate [4Fe-4S] cluster. Positions 546–568 (VEKDNGKKQKQKDIVTEKRKNRK) are disordered.

This sequence belongs to the UPF0313 family. The cofactor is [4Fe-4S] cluster.

This is UPF0313 protein FN0734 from Fusobacterium nucleatum subsp. nucleatum (strain ATCC 25586 / DSM 15643 / BCRC 10681 / CIP 101130 / JCM 8532 / KCTC 2640 / LMG 13131 / VPI 4355).